Reading from the N-terminus, the 85-residue chain is Phosphocarrier protein HPr (85 aa).

Positions 1–85 constitute an HPr domain; that stretch reads MFQQEVTITA…HLVKLMAELE (85 aa). The active-site Pros-phosphohistidine intermediate is His15.

Belongs to the HPr family.

It localises to the cytoplasm. Functionally, general (non sugar-specific) component of the phosphoenolpyruvate-dependent sugar phosphotransferase system (sugar PTS). This major carbohydrate active-transport system catalyzes the phosphorylation of incoming sugar substrates concomitantly with their translocation across the cell membrane. The phosphoryl group from phosphoenolpyruvate (PEP) is transferred to the phosphoryl carrier protein HPr by enzyme I. Phospho-HPr then transfers it to the PTS EIIA domain. The protein is Phosphocarrier protein HPr (ptsH) of Escherichia coli O157:H7.